Here is a 1259-residue protein sequence, read N- to C-terminus: uncharacterized protein (1259 aa).

A disordered region spans residues 354–410; that stretch reads KLNQAGGKRNSSMNNSTQNNNSSRSNNSARNNNSVWNNNNSAWKNNNSAWNDNSSWK. Low complexity predominate over residues 362–410; sequence RNSSMNNSTQNNNSSRSNNSARNNNSVWNNNNSAWKNNNSAWNDNSSWK.

It localises to the virion. This is an uncharacterized protein from Acanthamoeba polyphaga (Amoeba).